Here is a 51-residue protein sequence, read N- to C-terminus: Ribosomal protein eL39-like 2 (51 aa).

Belongs to the eukaryotic ribosomal protein eL39 family. As to quaternary structure, component of a male germ cell-specific 60S large ribosomal subunit (LSU), which contains RPL10L and RPL39L, instead of RPL10 and RPL39 paralogs. The composition of the rest of the complex is similar to classical ribosomes. In terms of tissue distribution, testis specific.

The protein localises to the cytoplasm. Male germ cell-specific component of the ribosome, which is required for the formation of sperm and male fertility. Replaces the RPL39 paralog in the ribosome of male germ cells. The ribosome is a large ribonucleoprotein complex responsible for the synthesis of proteins in the cell. The male germ cell-specific ribosome displays a ribosomal polypeptide exit tunnel of distinct size and charge states compared with the classical ribosome. It is responsible for regulating the biosynthesis and folding of a subset of male germ-cell-specific proteins that are essential for the formation of sperm. The chain is Ribosomal protein eL39-like 2 from Homo sapiens (Human).